Consider the following 61-residue polypeptide: UPF0434 protein Pput_3813 (61 aa).

It belongs to the UPF0434 family.

This chain is UPF0434 protein Pput_3813, found in Pseudomonas putida (strain ATCC 700007 / DSM 6899 / JCM 31910 / BCRC 17059 / LMG 24140 / F1).